The chain runs to 240 residues: Ubiquinone biosynthesis O-methyltransferase (240 aa).

Positions 36, 60, 81, and 123 each coordinate S-adenosyl-L-methionine.

This sequence belongs to the methyltransferase superfamily. UbiG/COQ3 family.

It carries out the reaction a 3-demethylubiquinol + S-adenosyl-L-methionine = a ubiquinol + S-adenosyl-L-homocysteine + H(+). It catalyses the reaction a 3-(all-trans-polyprenyl)benzene-1,2-diol + S-adenosyl-L-methionine = a 2-methoxy-6-(all-trans-polyprenyl)phenol + S-adenosyl-L-homocysteine + H(+). The protein operates within cofactor biosynthesis; ubiquinone biosynthesis. O-methyltransferase that catalyzes the 2 O-methylation steps in the ubiquinone biosynthetic pathway. The chain is Ubiquinone biosynthesis O-methyltransferase from Rickettsia bellii (strain OSU 85-389).